The chain runs to 494 residues: Argininosuccinate lyase (494 aa).

It belongs to the lyase 1 family. Argininosuccinate lyase subfamily.

The protein resides in the cytoplasm. It carries out the reaction 2-(N(omega)-L-arginino)succinate = fumarate + L-arginine. Its pathway is amino-acid biosynthesis; L-arginine biosynthesis; L-arginine from L-ornithine and carbamoyl phosphate: step 3/3. This chain is Argininosuccinate lyase, found in Methanosphaerula palustris (strain ATCC BAA-1556 / DSM 19958 / E1-9c).